Reading from the N-terminus, the 151-residue chain is Transcription antitermination protein NusB (151 aa).

Belongs to the NusB family.

Its function is as follows. Involved in transcription antitermination. Required for transcription of ribosomal RNA (rRNA) genes. Binds specifically to the boxA antiterminator sequence of the ribosomal RNA (rrn) operons. The chain is Transcription antitermination protein NusB from Photobacterium profundum (strain SS9).